A 545-amino-acid chain; its full sequence is DNA-binding protein REPIN1 (545 aa).

Residues 1–50 (MLEQRCRGPTAMGPAQPWLFSGPSQESSQPDRGLRYQGKSAQPRGQTPGK) are disordered. S27 is subject to Phosphoserine. The residue at position 39 (K39) is an N6-acetyllysine. Residues 52–74 (HRCAHCRKRFPGWVALWLHARRC) form a C2H2-type 1; atypical zinc finger. C2H2-type zinc fingers lie at residues 80–102 (LPCH…LQVH) and 111–133 (FICH…LRAH). Residues 140-162 (ITCPECDRRFWRQKQLRAHLRRC) form a C2H2-type 4; atypical zinc finger. 11 consecutive C2H2-type zinc fingers follow at residues 172–194 (FICG…KRVH), 229–251 (FQCA…RRVH), 257–279 (HQCP…RRIH), 285–307 (YPCT…SKIH), 353–375 (HSCS…QRQH), 381–403 (FACT…SRVH), 409–431 (FACE…RRDH), 437–459 (FVCP…RRIH), 465–487 (YVCP…RRIH), 493–515 (YACP…RKSH), and 521–543 (FCCA…QKKH). The residue at position 269 (K269) is an N6-acetyllysine.

As to quaternary structure, homodimers and homomultimers. Found in a complex with RIP60 and RIP100.

The protein localises to the nucleus. The protein resides in the cytoplasm. It is found in the cytosol. Functionally, sequence-specific double-stranded DNA-binding protein. Binds ATT-rich and T-rich DNA sequences and facilitates DNA bending. May regulate the expression of genes involved in cellular fatty acid import, including SCARB1/CD36, and genes involved in lipid droplet formation. May regulate the expression of LCN2, and thereby influence iron metabolism and apoptosis-related pathways. May regulate the expression of genes involved in glucose transport. This is DNA-binding protein REPIN1 (Repin1) from Mus musculus (Mouse).